The sequence spans 199 residues: dITP/XTP pyrophosphatase (199 aa).

7-12 provides a ligand contact to substrate; that stretch reads TGNAGK. Asp-68 serves as the catalytic Proton acceptor. Asp-68 is a Mg(2+) binding site. Residues Ser-69, 153-156, Lys-176, and 181-182 contribute to the substrate site; these read FGYD and HR.

It belongs to the HAM1 NTPase family. Homodimer. Mg(2+) serves as cofactor.

The catalysed reaction is XTP + H2O = XMP + diphosphate + H(+). It catalyses the reaction dITP + H2O = dIMP + diphosphate + H(+). It carries out the reaction ITP + H2O = IMP + diphosphate + H(+). Its function is as follows. Pyrophosphatase that catalyzes the hydrolysis of nucleoside triphosphates to their monophosphate derivatives, with a high preference for the non-canonical purine nucleotides XTP (xanthosine triphosphate), dITP (deoxyinosine triphosphate) and ITP. Seems to function as a house-cleaning enzyme that removes non-canonical purine nucleotides from the nucleotide pool, thus preventing their incorporation into DNA/RNA and avoiding chromosomal lesions. This chain is dITP/XTP pyrophosphatase, found in Halorhodospira halophila (strain DSM 244 / SL1) (Ectothiorhodospira halophila (strain DSM 244 / SL1)).